The sequence spans 160 residues: Protein-export protein SecB (160 aa).

The protein belongs to the SecB family. Homotetramer, a dimer of dimers. One homotetramer interacts with 1 SecA dimer.

Its subcellular location is the cytoplasm. Functionally, one of the proteins required for the normal export of preproteins out of the cell cytoplasm. It is a molecular chaperone that binds to a subset of precursor proteins, maintaining them in a translocation-competent state. It also specifically binds to its receptor SecA. This is Protein-export protein SecB from Rhizobium johnstonii (strain DSM 114642 / LMG 32736 / 3841) (Rhizobium leguminosarum bv. viciae).